Reading from the N-terminus, the 320-residue chain is uncharacterized protein (320 aa).

Belongs to the NAD(P)-dependent epimerase/dehydratase family.

This is an uncharacterized protein from Staphylococcus saprophyticus subsp. saprophyticus (strain ATCC 15305 / DSM 20229 / NCIMB 8711 / NCTC 7292 / S-41).